Reading from the N-terminus, the 160-residue chain is Ribosomal RNA large subunit methyltransferase H (160 aa).

S-adenosyl-L-methionine contacts are provided by residues Leu76, Gly108, and 127 to 132; that span reads FGALTW.

Belongs to the RNA methyltransferase RlmH family. As to quaternary structure, homodimer.

Its subcellular location is the cytoplasm. It carries out the reaction pseudouridine(1915) in 23S rRNA + S-adenosyl-L-methionine = N(3)-methylpseudouridine(1915) in 23S rRNA + S-adenosyl-L-homocysteine + H(+). In terms of biological role, specifically methylates the pseudouridine at position 1915 (m3Psi1915) in 23S rRNA. The protein is Ribosomal RNA large subunit methyltransferase H of Mesorhizobium japonicum (strain LMG 29417 / CECT 9101 / MAFF 303099) (Mesorhizobium loti (strain MAFF 303099)).